Here is a 716-residue protein sequence, read N- to C-terminus: Probable calcium-binding mitochondrial carrier K02F3.2 (716 aa).

The segment at 1 to 345 is N-terminal domain; the sequence is MSFDHLLTSS…CLKDIQAIDP (345 aa). 4 consecutive EF-hand domains span residues 93–121, 127–162, 165–195, and 198–233; these read YNKE…FCAF, SPDA…TQPL, QDFD…CQLL, and FYEE…VKGH. The Ca(2+) site is built by Asp106, Thr108, Asp110, Glu117, Asp140, Asn142, Ser144, Thr146, and Glu151. Ca(2+)-binding residues include Asp211, Asn213, Asn215, Thr217, and Asp222. The interval 346–362 is linker loop domain; it reads ERLKRVSQMDRLINIKA. Positions 372-664 are carrier domain; that stretch reads GTAFLESAYR…RLFYVDFAGS (293 aa). Solcar repeat units lie at residues 376-468, 475-560, and 568-656; these read LESA…MRDK, IPLY…AKLA, and NSPG…LQRL. Helical transmembrane passes span 382-399, 443-462, 485-498, 535-554, 574-591, and 631-650; these read FLLG…VYPI, GLLP…LTMN, GTGG…TNPL, GSRA…FPAY, FASA…VTPA, and GTAA…LLTY. The segment at 665–716 is C-terminal domain; the sequence is RPTGSELATTKTIQDESSTNPDHVGGYKLAAATFSGIEHKFGLFLPKFETSK.

It belongs to the mitochondrial carrier (TC 2.A.29) family. Homodimer (via N-terminus).

The protein localises to the mitochondrion inner membrane. In terms of biological role, mitochondrial and calcium-binding carrier that catalyzes the calcium-dependent exchange of cytoplasmic glutamate with mitochondrial aspartate across the mitochondrial inner membrane. The polypeptide is Probable calcium-binding mitochondrial carrier K02F3.2 (Caenorhabditis elegans).